Reading from the N-terminus, the 579-residue chain is Arginine--tRNA ligase (579 aa).

The 'HIGH' region motif lies at 127–137 (PNLAKEMHVGH).

It belongs to the class-I aminoacyl-tRNA synthetase family. As to quaternary structure, monomer.

Its subcellular location is the cytoplasm. The catalysed reaction is tRNA(Arg) + L-arginine + ATP = L-arginyl-tRNA(Arg) + AMP + diphosphate. The chain is Arginine--tRNA ligase from Ectopseudomonas mendocina (strain ymp) (Pseudomonas mendocina).